The chain runs to 226 residues: Cytidylate kinase (226 aa).

Residue 11–19 participates in ATP binding; the sequence is GPASAGKST.

This sequence belongs to the cytidylate kinase family. Type 1 subfamily.

Its subcellular location is the cytoplasm. The catalysed reaction is CMP + ATP = CDP + ADP. It catalyses the reaction dCMP + ATP = dCDP + ADP. The polypeptide is Cytidylate kinase (Pediococcus pentosaceus (strain ATCC 25745 / CCUG 21536 / LMG 10740 / 183-1w)).